The primary structure comprises 204 residues: Large ribosomal subunit protein eL15B (204 aa).

The segment at 165-185 is disordered; sequence TATGKKSRGINKGHKFNNTKA. Residues 169 to 185 are compositionally biased toward basic residues; sequence KKSRGINKGHKFNNTKA.

This sequence belongs to the eukaryotic ribosomal protein eL15 family. As to quaternary structure, component of the large ribosomal subunit (LSU). Mature yeast ribosomes consist of a small (40S) and a large (60S) subunit. The 40S small subunit contains 1 molecule of ribosomal RNA (18S rRNA) and 33 different proteins (encoded by 57 genes). The large 60S subunit contains 3 rRNA molecules (25S, 5.8S and 5S rRNA) and 46 different proteins (encoded by 81 genes).

Its subcellular location is the cytoplasm. Functionally, component of the ribosome, a large ribonucleoprotein complex responsible for the synthesis of proteins in the cell. The small ribosomal subunit (SSU) binds messenger RNAs (mRNAs) and translates the encoded message by selecting cognate aminoacyl-transfer RNA (tRNA) molecules. The large subunit (LSU) contains the ribosomal catalytic site termed the peptidyl transferase center (PTC), which catalyzes the formation of peptide bonds, thereby polymerizing the amino acids delivered by tRNAs into a polypeptide chain. The nascent polypeptides leave the ribosome through a tunnel in the LSU and interact with protein factors that function in enzymatic processing, targeting, and the membrane insertion of nascent chains at the exit of the ribosomal tunnel. This is Large ribosomal subunit protein eL15B from Saccharomyces cerevisiae (strain ATCC 204508 / S288c) (Baker's yeast).